The sequence spans 761 residues: NADP-dependent malic enzyme (761 aa).

The tract at residues 1–437 is malic enzyme; sequence MPGIDKTDRA…QLSARRDPIA (437 aa). Tyrosine 49 (proton donor) is an active-site residue. Lysine 104 (proton acceptor) is an active-site residue. Residues glutamate 146, aspartate 147, and aspartate 172 each coordinate a divalent metal cation. NADP(+) contacts are provided by residues 205-208, asparagine 297, and asparagine 329; that span reads AGAA. Residues 438–761 are phosphate acetyltransferase; the sequence is STLQRIVERV…AAIAAYNAGT (324 aa).

This sequence in the N-terminal section; belongs to the malic enzymes family. The protein in the C-terminal section; belongs to the phosphate acetyltransferase and butyryltransferase family. Homooctamer. Mg(2+) serves as cofactor. Requires Mn(2+) as cofactor.

It carries out the reaction (S)-malate + NADP(+) = pyruvate + CO2 + NADPH. It catalyses the reaction oxaloacetate + H(+) = pyruvate + CO2. The polypeptide is NADP-dependent malic enzyme (tme) (Rhizobium meliloti (strain 1021) (Ensifer meliloti)).